Here is a 418-residue protein sequence, read N- to C-terminus: Secreted aspartic protease 6 (418 aa).

A signal peptide spans 1-18 (MFLKNILSVLRFALLIDA). The propeptide at 19 to 76 (APVKRSPGFVTLDFNVKRSLVVPDDPTAESKRSPLFLDLDPTQIPVDDTGRNVGVDKR) is activation peptide. Residues 90–404 (YSADITVGSN…DLDDKKISMA (315 aa)) form the Peptidase A1 domain. The active site involves D108. 108–110 (DTG) contributes to the pepstatin A binding site. A disulfide bond links C123 and C135. A glycan (N-linked (GlcNAc...) asparagine) is linked at N138. D268 contacts Zn(2+). D294 is a catalytic residue. 294-298 (DSGTT) provides a ligand contact to pepstatin A. A disulfide bridge links C332 with C370.

It belongs to the peptidase A1 family.

Its subcellular location is the secreted. The enzyme catalyses Preferential cleavage at the carboxyl of hydrophobic amino acids, but fails to cleave 15-Leu-|-Tyr-16, 16-Tyr-|-Leu-17 and 24-Phe-|-Phe-25 of insulin B chain. Activates trypsinogen, and degrades keratin.. Inhibited by pepstatin A analogs. Secreted aspartic peptidases (SAPs) are a group of ten acidic hydrolases considered as key virulence factors. These enzymes supply the fungus with nutrient amino acids as well as are able to degrade the selected host's proteins involved in the immune defense. Moreover, acts toward human hemoglobin though limited proteolysis to generate a variety of antimicrobial hemocidins, enabling to compete with the other microorganisms of the same physiological niche using the microbicidal peptides generated from the host protein. The protein is Secreted aspartic protease 6 of Candida albicans (Yeast).